The chain runs to 245 residues: Transcriptional regulatory protein VxrB (245 aa).

The Response regulatory domain maps to 31-142; it reads TLLLVEDDKN…ELFARIRAQL (112 aa). 4-aspartylphosphate is present on D78. Residues 151-245 constitute a DNA-binding region (ompR/PhoB-type); it reads DSKVVTSNLT…LRGVGYKMKA (95 aa).

Phosphorylated by VxrA.

It localises to the cytoplasm. Its function is as follows. Member of the two-component regulatory system VxrB/VxrA involved in the regulation of diverses processes, including virulence, the type VI secretion system (T6SS) and biofilm formation. VxrB positively regulates the expression of the T6SS, a virulence nanomachine that directly translocates effectors into bacterial or host cells, thereby facilitating colonization by competing with sister cells and intestinal microbiota. In addition, it activates vpsL expression and biofilm formation, and represses motility. May regulate biofilm formation via its regulation of key biofilm regulators and cyclic di-GMP levels. Significantly contributes to both attack and defense via T6SS, while also influencing competition via regulation of biofilm matrix production. Is critical for colonization in the infant mouse model. The chain is Transcriptional regulatory protein VxrB from Vibrio cholerae serotype O1 (strain ATCC 39315 / El Tor Inaba N16961).